The chain runs to 258 residues: Imidazole glycerol phosphate synthase subunit HisF (258 aa).

Residues aspartate 11 and aspartate 130 contribute to the active site.

It belongs to the HisA/HisF family. In terms of assembly, heterodimer of HisH and HisF.

It is found in the cytoplasm. It carries out the reaction 5-[(5-phospho-1-deoxy-D-ribulos-1-ylimino)methylamino]-1-(5-phospho-beta-D-ribosyl)imidazole-4-carboxamide + L-glutamine = D-erythro-1-(imidazol-4-yl)glycerol 3-phosphate + 5-amino-1-(5-phospho-beta-D-ribosyl)imidazole-4-carboxamide + L-glutamate + H(+). It functions in the pathway amino-acid biosynthesis; L-histidine biosynthesis; L-histidine from 5-phospho-alpha-D-ribose 1-diphosphate: step 5/9. IGPS catalyzes the conversion of PRFAR and glutamine to IGP, AICAR and glutamate. The HisF subunit catalyzes the cyclization activity that produces IGP and AICAR from PRFAR using the ammonia provided by the HisH subunit. The sequence is that of Imidazole glycerol phosphate synthase subunit HisF from Yersinia pseudotuberculosis serotype O:3 (strain YPIII).